Consider the following 1187-residue polypeptide: DNA excision repair protein CSB (1187 aa).

Positions 31–43 (QATTDPADSSGPT) are enriched in polar residues. Disordered regions lie at residues 31–53 (QATT…PDDA), 75–102 (IKGA…HHGA), 217–242 (KRVE…MEAS), and 265–351 (DSES…EGSD). 2 stretches are compositionally biased toward basic and acidic residues: residues 92–101 (KGKDQPDHHG) and 217–230 (KRVE…RQDD). The span at 300–319 (KRPRNKTKRPLPGKKWRKAN) shows a compositional bias: basic residues. Residues 339–351 (SDDDEDQVTEGSD) are compositionally biased toward acidic residues. Residues 384–580 (WELHCQRAGG…WSLFDFVFPG (197 aa)) enclose the Helicase ATP-binding domain. Residue 397-404 (DEMGLGKT) participates in ATP binding. The segment at 457 to 480 (SSSKKSKRSSDSDSEASWDSDQEE) is disordered. Residues 468–480 (SDSEASWDSDQEE) show a composition bias toward acidic residues. The DEGH box motif lies at 531-534 (DEGH). The region spanning 716-876 (KVVEQVLKVW…RRFFKARDMK (161 aa)) is the Helicase C-terminal domain. 2 disordered regions span residues 916–945 (LYAA…HCPD) and 1095–1116 (GSAS…SSTR). The span at 918-933 (AASATPTTSGTEPSSS) shows a compositional bias: low complexity.

Belongs to the SNF2/RAD54 helicase family. As to quaternary structure, homodimer. Binds DNA. In terms of tissue distribution, expressed in proliferating tissues. Highly expressed in shoot apical meristem (SAM). Expressed in roots, young leaves, flag leaves, and panicles. Expressed at very low levels in mature leaves.

It localises to the nucleus. Essential factor involved in transcription-coupled nucleotide excision repair (TCR) which allows RNA polymerase II-blocking lesions to be rapidly removed from the transcribed strand of active genes. Upon DNA-binding, it locally modifies DNA conformation by wrapping the DNA around itself, thereby modifying the interface between stalled RNA polymerase II and DNA. It is required for transcription-coupled repair complex formation. This chain is DNA excision repair protein CSB, found in Oryza sativa subsp. japonica (Rice).